The following is a 155-amino-acid chain: S-ribosylhomocysteine lyase (155 aa).

The Fe cation site is built by histidine 54, histidine 58, and cysteine 122.

The protein belongs to the LuxS family. As to quaternary structure, homodimer. Requires Fe cation as cofactor.

It catalyses the reaction S-(5-deoxy-D-ribos-5-yl)-L-homocysteine = (S)-4,5-dihydroxypentane-2,3-dione + L-homocysteine. Involved in the synthesis of autoinducer 2 (AI-2) which is secreted by bacteria and is used to communicate both the cell density and the metabolic potential of the environment. The regulation of gene expression in response to changes in cell density is called quorum sensing. Catalyzes the transformation of S-ribosylhomocysteine (RHC) to homocysteine (HC) and 4,5-dihydroxy-2,3-pentadione (DPD). The protein is S-ribosylhomocysteine lyase of Deinococcus deserti (strain DSM 17065 / CIP 109153 / LMG 22923 / VCD115).